A 439-amino-acid polypeptide reads, in one-letter code: Sorting nexin-31 (439 aa).

Residues 1 to 109 form the PX domain; the sequence is MKMHFCIPVS…EFLTLVQLHT (109 aa). Residues 384-409 are disordered; the sequence is TEQSPEMQIEVPEQGRSKKHPSQPSQ.

It belongs to the sorting nexin family. As to quaternary structure, interacts with CCDC22, CCDC93, VPS26C and VPS35L, associates with the retriever and CCC complexes.

Its function is as follows. May be involved in protein trafficking. This is Sorting nexin-31 (Snx31) from Mus musculus (Mouse).